A 48-amino-acid polypeptide reads, in one-letter code: Small polypeptide DEVIL 14 (48 aa).

The helical transmembrane segment at 4 to 23 threads the bilayer; the sequence is TVVLRCCTSVTKVRTWKRCS. The required for DVL/RTFL small polypeptide activity stretch occupies residues 17-48; it reads RTWKRCSKQIKEQRARLYIIWKCAVFLLSSHD.

The protein belongs to the DVL/RTFL small polypeptides family.

Its subcellular location is the cell membrane. Its function is as follows. Small polypeptide acting as a regulatory molecule which coordinates cellular responses required for differentiation, growth and development, probably by restricting polar cell proliferation in lateral organs and coordinating socket cell recruitment and differentiation at trichome sites. The protein is Small polypeptide DEVIL 14 of Arabidopsis thaliana (Mouse-ear cress).